Consider the following 696-residue polypeptide: C2 domain-containing protein 2 (696 aa).

Residues 8 to 28 (VQWLFLVSLFVAALGTVGLYL) form a helical membrane-spanning segment. The SMP-LBD domain occupies 45 to 238 (EPDELRRRES…PTQVKEAQSL (194 aa)). Residue Ser54 is modified to Phosphoserine. In terms of domain architecture, C2 spans 241–357 (PSSTAQEPCP…RKQPNGPQTF (117 aa)). Ser436 carries the post-translational modification Phosphoserine. Thr440 carries the post-translational modification Phosphothreonine. The disordered stretch occupies residues 551-611 (ATEASATTPP…DGDELSESSL (61 aa)). The segment covering 573–588 (KPRENDLDSWELEKES) has biased composition (basic and acidic residues). The residue at position 581 (Ser581) is a Phosphoserine.

Its subcellular location is the membrane. This is C2 domain-containing protein 2 from Mus musculus (Mouse).